Consider the following 476-residue polypeptide: MSRFSGALQLTDIDDFITPAQECIKPIPINKKNSKSGAKISVQEDGYYEESGTGKQKLQKLEITLQDCLACSGCITSAEGVLITQQSQEELLKVLHENKKLKAEEDNNLSRTVVFSVATQPLISLAYRYKISVEETARHLAGYFRSLGADYVLSTKVADDLALLECRNEFLEKYRENNDLTMFSSSCPGWVCYAEKTHGNFILPHIATTRSPQQIMGVLVKQYLGKKLNLPASRIYHVTVMPCYDKKLEASREDFFSEVNASRDVDCVITSVEVEQMLLEVDQTLPAQEPADLDWPWWDERPELMVYSHESTYSGGYAEHVFRFAARELFNDARPIQLQIDQPRNRDLKEFFLEKDGIVLLRFAIANGFKNIQNLVQKLKRGKGSKFHFVEIMACPSGCINGGAQVRPISGQHVRELTQKLEELYTKLPRSQPDNIGTKKLYDDFFDGFGTDKSHNLLHTSYHSVDKLIPALNIKW.

8 residues coordinate [4Fe-4S] cluster: C23, C68, C71, C74, C187, C243, C395, and C399.

This sequence belongs to the NARF family.

Component of the cytosolic iron-sulfur (Fe/S) protein assembly machinery. Required for maturation of extramitochondrial Fe/S proteins. This is Probable cytosolic Fe-S cluster assembly factor GF22738 from Drosophila ananassae (Fruit fly).